Here is a 102-residue protein sequence, read N- to C-terminus: Cytochrome b (102 aa).

3 consecutive transmembrane segments (helical) span residues 1 to 21 (FGSL…FLAM), 45 to 66 (WLMR…FLHI), and 81 to 101 (WNIG…GYVL). Heme b is bound by residues His-51 and His-65.

The protein belongs to the cytochrome b family. In terms of assembly, the cytochrome bc1 complex contains 3 respiratory subunits (MT-CYB, CYC1 and UQCRFS1), 2 core proteins (UQCRC1 and UQCRC2) and probably 6 low-molecular weight proteins. The cofactor is heme b.

The protein localises to the mitochondrion inner membrane. Functionally, component of the ubiquinol-cytochrome c reductase complex (complex III or cytochrome b-c1 complex) that is part of the mitochondrial respiratory chain. The b-c1 complex mediates electron transfer from ubiquinol to cytochrome c. Contributes to the generation of a proton gradient across the mitochondrial membrane that is then used for ATP synthesis. The polypeptide is Cytochrome b (mt-cyb) (Ambystoma tigrinum (Eastern tiger salamander)).